Reading from the N-terminus, the 439-residue chain is MTDYQGKNITVIGLGKTGLSCVDFLTAKKANVRVIDTRKIPAGAEQLDKSIPLHTGSLNQQWLLESDMIVISPGLSVKTAEIQTALSAGVEVVGDIELFCREAAKPVIAITGSNGKSTVTALVTEMGKAAGLSVGMGGNIGIPALSLLNENHDLYVLELSSFQLETTYSLKATAATVLNVTEDHMNRYADLEEYRQAKLNIYHHCQTAVINGEDPLTKEDDKQSAQQQVSFAENNADYWLKTENGKKYLMAKDKLILACDEIKLTGRHNHMNALAAIALAQAAGIKNSGILTALRTFPGLAHRFQLAHMANGVRWVNDSKATNVGSTVAALTGLHIEGKLHLLLGGDGKGADFSELEKLINKPEIFCYCFGQDGAHLAKLSSQSQLFNTMEQAIETLRPTLKPGDMVLLSPACASLDQFASFEKRGEEFTRLAKLSVAQ.

Residue 112-118 (GSNGKST) coordinates ATP.

The protein belongs to the MurCDEF family.

It localises to the cytoplasm. The catalysed reaction is UDP-N-acetyl-alpha-D-muramoyl-L-alanine + D-glutamate + ATP = UDP-N-acetyl-alpha-D-muramoyl-L-alanyl-D-glutamate + ADP + phosphate + H(+). The protein operates within cell wall biogenesis; peptidoglycan biosynthesis. Cell wall formation. Catalyzes the addition of glutamate to the nucleotide precursor UDP-N-acetylmuramoyl-L-alanine (UMA). In Mannheimia succiniciproducens (strain KCTC 0769BP / MBEL55E), this protein is UDP-N-acetylmuramoylalanine--D-glutamate ligase.